We begin with the raw amino-acid sequence, 179 residues long: Interleukin-10 (179 aa).

The first 19 residues, methionine 1–alanine 19, serve as a signal peptide directing secretion. Intrachain disulfides connect cysteine 31-cysteine 127 and cysteine 81-cysteine 133. N-linked (GlcNAc...) asparagine glycosylation is present at asparagine 135.

It belongs to the IL-10 family. As to quaternary structure, homodimer. Interacts with IL10RA and IL10RB.

The protein resides in the secreted. Functionally, major immune regulatory cytokine that acts on many cells of the immune system where it has profound anti-inflammatory functions, limiting excessive tissue disruption caused by inflammation. Mechanistically, IL10 binds to its heterotetrameric receptor comprising IL10RA and IL10RB leading to JAK1 and STAT2-mediated phosphorylation of STAT3. In turn, STAT3 translocates to the nucleus where it drives expression of anti-inflammatory mediators. Targets antigen-presenting cells (APCs) such as macrophages and monocytes and inhibits their release of pro-inflammatory cytokines including granulocyte-macrophage colony-stimulating factor /GM-CSF, granulocyte colony-stimulating factor/G-CSF, IL-1 alpha, IL-1 beta, IL-6, IL-8 and TNF-alpha. Also interferes with antigen presentation by reducing the expression of MHC-class II and co-stimulatory molecules, thereby inhibiting their ability to induce T cell activation. In addition, controls the inflammatory response of macrophages by reprogramming essential metabolic pathways including mTOR signaling. This chain is Interleukin-10 (IL10), found in Bubalus carabanensis (Swamp type water buffalo).